Reading from the N-terminus, the 344-residue chain is MKQTKTKYGKMKQIVSNLKLPDYRYEQLTKAIFHQRIDNFDDMHILPKVLRMSLVNEFGKNVSSVIPVFSQDSKQAQKLLFELTDGERIEAVGLKYKQGWESFCISSQCGCGFGCRFCATGSAGFKRNLTADEITDQLLYFYFNDHRLNSISFMGMGEAFANPELFDAVKILTDQNLFGLSQRRITISTIGIIPGIQSLTQKFPQVNLAFSLHSPFESQRSDLMPINKRFPLNQVMKTLDEHIIHTGRRVFIAYIMLEGINDSKEHAEAVVGLLKNRGSWEHLYHIDLIPYNSTDKTTFKFQSSNAIKQFCSTLKKAGISATVRTQFGSEISAACGQLCYENEL.

The active-site Proton acceptor is the glutamate 90. The Radical SAM core domain occupies 97–330; sequence KQGWESFCIS…ATVRTQFGSE (234 aa). Residues cysteine 104 and cysteine 335 are joined by a disulfide bond. 3 residues coordinate [4Fe-4S] cluster: cysteine 111, cysteine 115, and cysteine 118. S-adenosyl-L-methionine is bound by residues 157 to 158, serine 188, 211 to 213, and asparagine 292; these read GE and SLH. Cysteine 335 functions as the S-methylcysteine intermediate in the catalytic mechanism.

This sequence belongs to the radical SAM superfamily. RlmN family. Cfr subfamily. The cofactor is [4Fe-4S] cluster.

It is found in the cytoplasm. The catalysed reaction is adenosine(2503) in 23S rRNA + 2 reduced [2Fe-2S]-[ferredoxin] + 2 S-adenosyl-L-methionine = 8-methyladenosine(2503) in 23S rRNA + 5'-deoxyadenosine + L-methionine + 2 oxidized [2Fe-2S]-[ferredoxin] + S-adenosyl-L-homocysteine. In terms of biological role, specifically methylates position 8 of adenine 2503 in 23S rRNA. Confers resistance to some classes of antibiotics. The polypeptide is Ribosomal RNA large subunit methyltransferase Cfr (Clostridium botulinum (strain Langeland / NCTC 10281 / Type F)).